Reading from the N-terminus, the 176-residue chain is Large ribosomal subunit protein uL6 (176 aa).

The protein belongs to the universal ribosomal protein uL6 family. In terms of assembly, part of the 50S ribosomal subunit.

In terms of biological role, this protein binds to the 23S rRNA, and is important in its secondary structure. It is located near the subunit interface in the base of the L7/L12 stalk, and near the tRNA binding site of the peptidyltransferase center. The protein is Large ribosomal subunit protein uL6 of Lacticaseibacillus paracasei (strain ATCC 334 / BCRC 17002 / CCUG 31169 / CIP 107868 / KCTC 3260 / NRRL B-441) (Lactobacillus paracasei).